The primary structure comprises 345 residues: UDP-N-acetylenolpyruvoylglucosamine reductase (345 aa).

Positions 15 to 218 (VDVYAEKVII…NTIIFLRYKK (204 aa)) constitute an FAD-binding PCMH-type domain. R161 is a catalytic residue. S230 acts as the Proton donor in catalysis. E327 is a catalytic residue.

This sequence belongs to the MurB family. The cofactor is FAD.

The protein localises to the cytoplasm. It carries out the reaction UDP-N-acetyl-alpha-D-muramate + NADP(+) = UDP-N-acetyl-3-O-(1-carboxyvinyl)-alpha-D-glucosamine + NADPH + H(+). It participates in cell wall biogenesis; peptidoglycan biosynthesis. In terms of biological role, cell wall formation. The protein is UDP-N-acetylenolpyruvoylglucosamine reductase of Blochmanniella floridana.